The primary structure comprises 290 residues: MKKIWIGMLAAAVLLLMVPKVSLADAAVGDVIVTLGADLSESDKQKVLDEMNVPDNATTVTVTNKEEHEYLGKYISNAQIGSRAISSSSITIAKKGSGLNVETHNISGITDEMYLNALMTAGVKDAKVYVTAPFEVSGTAALTGLIKAYEVSSDEAISEDVKQVANQELVTTSELGDKIGNENAAALIAKIKEEFAKNGVPDNKADIEKQVDDAASDLNVTLTDSQKNQLVSLFNKMKNADIDWGQVSDQLDKAKDKITKFIESDEGKNFIQKVIDFFVSIWNAIVSIFK.

Its subcellular location is the cell membrane. It is found in the membrane raft. This is an uncharacterized protein from Bacillus subtilis (strain 168).